The sequence spans 179 residues: Replication restart protein DnaT (179 aa).

The disordered stretch occupies residues 154 to 179 (SNGGLPKRDVNTVSEPDSQIPPGFRG).

Belongs to the DnaT family. As to quaternary structure, homooligomerizes. Interacts with PriB. Component of the replication restart primosome. Primosome assembly occurs via a 'hand-off' mechanism. PriA binds to replication forks, subsequently PriB then DnaT bind; DnaT then displaces ssDNA to generate the helicase loading substrate.

In terms of biological role, involved in the restart of stalled replication forks, which reloads the replicative helicase on sites other than the origin of replication. Can function in multiple replication restart pathways. Displaces ssDNA from a PriB-ssDNA complex. Probably forms a spiral filament on ssDNA. The sequence is that of Replication restart protein DnaT from Escherichia coli O127:H6 (strain E2348/69 / EPEC).